The following is a 1015-amino-acid chain: Probable beta-galactosidase B (1015 aa).

A signal peptide spans 1-20 (MAHIYRLLLLLLSNLWFSTA). An N-linked (GlcNAc...) asparagine glycan is attached at asparagine 23. Tyrosine 90 lines the substrate pocket. 2 N-linked (GlcNAc...) asparagine glycosylation sites follow: asparagine 99 and asparagine 100. Substrate contacts are provided by asparagine 135, alanine 136, and glutamate 137. Asparagine 172 is a glycosylation site (N-linked (GlcNAc...) asparagine). Asparagine 195 is a substrate binding site. Glutamate 196 (proton donor) is an active-site residue. A glycan (N-linked (GlcNAc...) asparagine) is linked at asparagine 211. Position 265 (tyrosine 265) interacts with substrate. Cysteine 271 and cysteine 324 are joined by a disulfide. Catalysis depends on glutamate 308, which acts as the Nucleophile. Tyrosine 373 is a substrate binding site. 7 N-linked (GlcNAc...) asparagine glycosylation sites follow: asparagine 411, asparagine 456, asparagine 554, asparagine 679, asparagine 735, asparagine 775, and asparagine 821.

The protein belongs to the glycosyl hydrolase 35 family.

Its subcellular location is the secreted. It carries out the reaction Hydrolysis of terminal non-reducing beta-D-galactose residues in beta-D-galactosides.. Cleaves beta-linked terminal galactosyl residues from gangliosides, glycoproteins, and glycosaminoglycans. The chain is Probable beta-galactosidase B (lacB) from Aspergillus fumigatus (strain CBS 144.89 / FGSC A1163 / CEA10) (Neosartorya fumigata).